The primary structure comprises 136 residues: Holo-[acyl-carrier-protein] synthase (136 aa).

Mg(2+)-binding residues include Asp-7 and Glu-53.

Belongs to the P-Pant transferase superfamily. AcpS family. Mg(2+) serves as cofactor.

It localises to the cytoplasm. It catalyses the reaction apo-[ACP] + CoA = holo-[ACP] + adenosine 3',5'-bisphosphate + H(+). Its function is as follows. Transfers the 4'-phosphopantetheine moiety from coenzyme A to a Ser of acyl-carrier-protein. This Roseiflexus castenholzii (strain DSM 13941 / HLO8) protein is Holo-[acyl-carrier-protein] synthase.